Consider the following 366-residue polypeptide: Protein RecA (366 aa).

An ATP-binding site is contributed by 77 to 84 (GPESSGKT). The segment at 346–366 (IGGPGGEDDDAGGAAGVGDEA) is disordered.

It belongs to the RecA family.

It localises to the cytoplasm. In terms of biological role, can catalyze the hydrolysis of ATP in the presence of single-stranded DNA, the ATP-dependent uptake of single-stranded DNA by duplex DNA, and the ATP-dependent hybridization of homologous single-stranded DNAs. It interacts with LexA causing its activation and leading to its autocatalytic cleavage. The sequence is that of Protein RecA from Rhodospirillum rubrum (strain ATCC 11170 / ATH 1.1.1 / DSM 467 / LMG 4362 / NCIMB 8255 / S1).